Here is a 449-residue protein sequence, read N- to C-terminus: Glutamyl-tRNA reductase (449 aa).

Substrate-binding positions include 49–52 (TCNR), Ser107, 112–114 (EPQ), and Gln118. The active-site Nucleophile is the Cys50. 187 to 192 (GAGETI) provides a ligand contact to NADP(+). Residues 418 to 449 (QLVERSSEGDDSQQAGADGGAARGDRRAAGGS) are disordered. Positions 440 to 449 (RGDRRAAGGS) are enriched in basic and acidic residues.

It belongs to the glutamyl-tRNA reductase family. In terms of assembly, homodimer.

It carries out the reaction (S)-4-amino-5-oxopentanoate + tRNA(Glu) + NADP(+) = L-glutamyl-tRNA(Glu) + NADPH + H(+). Its pathway is porphyrin-containing compound metabolism; protoporphyrin-IX biosynthesis; 5-aminolevulinate from L-glutamyl-tRNA(Glu): step 1/2. Catalyzes the NADPH-dependent reduction of glutamyl-tRNA(Glu) to glutamate 1-semialdehyde (GSA). The chain is Glutamyl-tRNA reductase from Halorhodospira halophila (strain DSM 244 / SL1) (Ectothiorhodospira halophila (strain DSM 244 / SL1)).